The sequence spans 343 residues: Probable transcription factor MYB58 (343 aa).

Positions methionine 1–arginine 30 are disordered. Residues arginine 15–glutamate 27 show a composition bias toward gly residues. 2 HTH myb-type domains span residues glycine 26 to leucine 78 and arginine 79 to alanine 134. DNA-binding regions (H-T-H motif) lie at residues tryptophan 54–lysine 77 and tryptophan 107–glutamine 130. 3 disordered regions span residues leucine 137–phenylalanine 169, proline 219–leucine 238, and aspartate 307–leucine 343. Residues proline 157–phenylalanine 169 show a composition bias toward polar residues. Pro residues predominate over residues glutamine 320–serine 336.

Its subcellular location is the nucleus. Its function is as follows. Probable transcription factor. The chain is Probable transcription factor MYB58 from Oryza sativa subsp. japonica (Rice).